Here is a 372-residue protein sequence, read N- to C-terminus: Solute carrier family 35 member F6 (372 aa).

An N-terminal signal peptide occupies residues 1-18 (MAWTKYQLFLAGLMLVTG). A run of 2 helical transmembrane segments spans residues 48 to 68 (FVQAVGMFLGEFSCLAAFYLL) and 89 to 109 (LLFLPPALCDMTGTSIMYVAL). In terms of domain architecture, EamA spans 105–160 (MYVALNMTSASSFQMLRGAVIIFTGLFSVAFLDRRLVPSQWLGILITIAGLVVVGL). N-linked (GlcNAc...) asparagine glycosylation occurs at N110. 7 helical membrane passes run 116-136 (SFQMLRGAVIIFTGLFSVAFL), 145-165 (WLGILITIAGLVVVGLADLLS), 176-196 (VITGDLLIIMAQIIIAIQMVL), 211-231 (AVGIEGFFGFVILSLLLVPMY), 261-281 (LIALALLGNISSIAFFNFSGI), 293-312 (MVLDTLRTVVIWAFTLALGW), and 320-336 (ILGFLILLMGTALYNGL). Residue T366 is modified to Phosphothreonine.

It belongs to the SLC35F solute transporter family. In terms of assembly, interacts with SLC25A5.

The protein localises to the mitochondrion. It localises to the lysosome membrane. Involved in the maintenance of mitochondrial membrane potential in pancreatic ductal adenocarcinoma (PDAC) cells. Promotes pancreatic ductal adenocarcinoma (PDAC) cell growth. May play a role as a nucleotide-sugar transporter. The polypeptide is Solute carrier family 35 member F6 (Slc35f6) (Rattus norvegicus (Rat)).